The sequence spans 552 residues: Carboxypeptidase Y homolog A (552 aa).

Positions 1–18 are cleaved as a signal peptide; that stretch reads MRIATSTLLVGAASAAFA. The propeptide occupies 19–133; it reads PQDGTQRVLN…KLDNYNLRAR (115 aa). Cystine bridges form between Cys-187–Cys-427, Cys-321–Cys-335, Cys-345–Cys-368, Cys-352–Cys-361, and Cys-390–Cys-397. A glycan (N-linked (GlcNAc...) asparagine) is linked at Asn-218. The active site involves Ser-274. Asp-466 is an active-site residue. The N-linked (GlcNAc...) asparagine glycan is linked to Asn-516. His-527 is a catalytic residue.

This sequence belongs to the peptidase S10 family.

The protein localises to the vacuole. The enzyme catalyses Release of a C-terminal amino acid with broad specificity.. Its function is as follows. Vacuolar carboxypeptidase involved in degradation of small peptides. Digests preferentially peptides containing an aliphatic or hydrophobic residue in P1' position, as well as methionine, leucine or phenylalanine in P1 position of ester substrate. In Pyricularia oryzae (strain 70-15 / ATCC MYA-4617 / FGSC 8958) (Rice blast fungus), this protein is Carboxypeptidase Y homolog A (CPYA).